The following is a 794-amino-acid chain: Protein transport protein SEC23 G (794 aa).

Zn(2+) is bound by residues Cys-56, Cys-59, Cys-78, and Cys-81. The tract at residues 56 to 81 is zinc finger-like; it reads CSRCGAVLNPYARVDYQSRIWSCPFC.

Belongs to the SEC23/SEC24 family. SEC23 subfamily. In terms of assembly, component of the coat protein complex II (COPII), composed of at least five proteins: the Sec23/24 complex, the Sec13/31 complex and Sar1. Interacts with SEC24A.

The protein resides in the cytoplasmic vesicle. The protein localises to the COPII-coated vesicle membrane. It localises to the endoplasmic reticulum membrane. It is found in the membrane. Its function is as follows. Component of the coat protein complex II (COPII) which promotes the formation of transport vesicles from the endoplasmic reticulum (ER). The coat has two main functions, the physical deformation of the endoplasmic reticulum membrane into vesicles and the selection of cargo molecules. This chain is Protein transport protein SEC23 G, found in Arabidopsis thaliana (Mouse-ear cress).